The chain runs to 152 residues: UPF0311 protein blr7842 (152 aa).

This sequence belongs to the UPF0311 family.

The sequence is that of UPF0311 protein blr7842 from Bradyrhizobium diazoefficiens (strain JCM 10833 / BCRC 13528 / IAM 13628 / NBRC 14792 / USDA 110).